The primary structure comprises 708 residues: Phosphate acetyltransferase (708 aa).

The tract at residues 388 to 708 is phosphate acetyltransferase; the sequence is EFCYNLKLLS…TIALTSIQSE (321 aa).

The protein in the N-terminal section; belongs to the CobB/CobQ family. In the C-terminal section; belongs to the phosphate acetyltransferase and butyryltransferase family. In terms of assembly, homohexamer.

The protein localises to the cytoplasm. It carries out the reaction acetyl-CoA + phosphate = acetyl phosphate + CoA. Its pathway is metabolic intermediate biosynthesis; acetyl-CoA biosynthesis; acetyl-CoA from acetate: step 2/2. Its function is as follows. Involved in acetate metabolism. The protein is Phosphate acetyltransferase (pta) of Buchnera aphidicola subsp. Acyrthosiphon pisum (strain APS) (Acyrthosiphon pisum symbiotic bacterium).